Consider the following 1247-residue polypeptide: Structural polyprotein (1247 aa).

The disordered stretch occupies residues 52-103; it reads ALRTVPQKPRRTRKTKKQKQVKQEQQSTRNQKKKAPKQKQTQKKKRPGRRER. 2 stretches are compositionally biased toward basic residues: residues 59 to 71 and 81 to 100; these read KPRRTRKTKKQKQ and NQKKKAPKQKQTQKKKRPGR. Residues 86-99 form a ribosome-binding region; sequence APKQKQTQKKKRPG. An intrachain disulfide couples Cys-112 to Cys-127. Residues 112–260 enclose the Peptidase S3 domain; it reads CIFEVKHEGK…KITPEGSVEW (149 aa). The Charge relay system role is filled by His-138. The segment at 154–159 is interaction with spike glycoprotein E2; sequence KRSSKY. Active-site charge relay system residues include Asp-160 and Ser-212. The segment at 261-273 is functions as an uncleaved signal peptide for the precursor of protein E3/E2; it reads SLALPVMCLLANT. 9 cysteine pairs are disulfide-bonded: Cys-268/Cys-277, Cys-282/Cys-286, Cys-285/Cys-317, Cys-343/Cys-449, Cys-346/Cys-352, Cys-415/Cys-429, Cys-477/Cys-590, Cys-525/Cys-549, and Cys-527/Cys-544. Asn-272 is a glycosylation site (N-linked (GlcNAc...) asparagine; by host). The Extracellular segment spans residues 325–691; the sequence is NARENFNVYK…YYYELYPTTT (367 aa). An N-linked (GlcNAc...) asparagine; by host glycan is attached at Asn-587. Residues 692-712 traverse the membrane as a helical segment; sequence IAVLAAASIVVASLVSLSLGM. The Cytoplasmic portion of the chain corresponds to 713-747; the sequence is CICARRRCITPYELTPGATIPFLLGVLCCVKTAKA. The segment at 715 to 719 is interaction with the capsid protein; that stretch reads CARRR. 3 S-palmitoyl cysteine; by host lipidation sites follow: Cys-720, Cys-740, and Cys-741. The interval 720–740 is transient transmembrane before p62-6K protein processing; it reads CITPYELTPGATIPFLLGVLC. The cysteines at positions 720 and 741 are disulfide-linked. Residues 748–762 are Extracellular-facing; sequence ASYYEAATYLWNEQQ. Residues 763-783 form a helical membrane-spanning segment; it reads PLFWLQLLIPLSAAIVACNCL. Residues 784-787 are Cytoplasmic-facing; sequence KLLP. Residues 788 to 808 form a helical membrane-spanning segment; the sequence is CCCKTLTFLAVMSIGARTVSA. Over 809–1223 the chain is Extracellular; sequence YEHATVIPNT…AMSWVQKITG (415 aa). Cystine bridges form between Cys-857–Cys-922, Cys-870–Cys-902, Cys-871–Cys-904, and Cys-876–Cys-886. Residues 892–909 are E1 fusion peptide loop; the sequence is VYPFMWGGAYCFCDAENT. N-linked (GlcNAc...) asparagine; by host glycans are attached at residues Asn-949 and Asn-1078. 4 cysteine pairs are disulfide-bonded: Cys-1067-Cys-1079, Cys-1109-Cys-1184, Cys-1114-Cys-1188, and Cys-1136-Cys-1178. The chain crosses the membrane as a helical span at residues 1224–1244; it reads GVGLVVAIAALILIIVLCVSF. Residue Cys-1241 is the site of S-palmitoyl cysteine; by host attachment. Residues 1245 to 1247 lie on the Cytoplasmic side of the membrane; it reads SRH.

As to quaternary structure, homodimer. Homomultimer. Interacts with host karyopherin KPNA4; this interaction allows the nuclear import of the viral capsid protein. Interacts with spike glycoprotein E2. Interacts with host IRAK1; the interaction leads to inhibition of IRAK1-dependent signaling. In terms of assembly, the precursor of protein E3/E2 and E1 form a heterodimer shortly after synthesis. The precursor of protein E3/E2 and E1 form a heterodimer shortly after synthesis. Processing of the precursor of protein E3/E2 into E2 and E3 results in a heterodimer of the spike glycoproteins E2 and E1. Spike at virion surface are constituted of three E2-E1 heterodimers. After target cell attachment and endocytosis, E1 change conformation to form homotrimers. Interacts with 6K protein. As to quaternary structure, interacts with spike glycoprotein E1. Processing of the precursor of protein E3/E2 into E2 and E3 results in a heterodimer of the spike glycoproteins E2 and E1. Spike at virion surface are constituted of a trimer of E2-E1 heterodimers. Interacts with 6K protein. Interacts with host MXRA8; this interaction mediates virus entry. In terms of assembly, oligomer. Interacts with spike glycoprotein E1. Interacts with spike glycoprotein E2. Post-translationally, structural polyprotein: Specific enzymatic cleavages in vivo yield mature proteins. Capsid protein is auto-cleaved during polyprotein translation, unmasking a signal peptide at the N-terminus of the precursor of E3/E2. The remaining polyprotein is then targeted to the host endoplasmic reticulum, where host signal peptidase cleaves it into pE2, 6K and E1 proteins. pE2 is further processed to mature E3 and E2 by host furin in trans-Golgi vesicle. In terms of processing, palmitoylated via thioester bonds. These palmitoylations may induce disruption of the C-terminus transmembrane. This would result in the reorientation of E2 C-terminus from lumenal to cytoplasmic side. N-glycosylated. Post-translationally, palmitoylated via thioester bonds.

It is found in the virion. The protein resides in the host cytoplasm. The protein localises to the host cell membrane. It localises to the virion membrane. Its subcellular location is the host Golgi apparatus. It is found in the host trans-Golgi network. The protein resides in the host endoplasmic reticulum. It catalyses the reaction Autocatalytic release of the core protein from the N-terminus of the togavirus structural polyprotein by hydrolysis of a -Trp-|-Ser- bond.. Possesses a protease activity that results in its autocatalytic cleavage from the nascent structural protein. Following its self-cleavage, the capsid protein transiently associates with ribosomes, and within several minutes the protein binds to viral RNA and rapidly assembles into icosahedric core particles. The resulting nucleocapsid eventually associates with the cytoplasmic domain of the spike glycoprotein E2 at the cell membrane, leading to budding and formation of mature virions. In case of infection, new virions attach to target cells and after clathrin-mediated endocytosis their membrane fuses with the host endosomal membrane. This leads to the release of the nucleocapsid into the cytoplasm, followed by an uncoating event necessary for the genomic RNA to become accessible. The uncoating might be triggered by the interaction of capsid proteins with ribosomes. Binding of ribosomes would release the genomic RNA since the same region is genomic RNA-binding and ribosome-binding. Its function is as follows. Provides the signal sequence for the translocation of the precursor of protein E3/E2 to the host endoplasmic reticulum. Mediates pH protection of spike glycoprotein E1 during the transport via the secretory pathway. In terms of biological role, plays a role in viral attachment to target host cell, by binding to the cell receptor MXRA8. Synthesized as a p62 precursor which is processed by furin at the cell membrane just before virion budding, giving rise to E2-E1 heterodimer. The p62-E1 heterodimer is stable, whereas E2-E1 is unstable and dissociate at low pH. p62 is processed at the last step, presumably to avoid E1 fusion activation before its final export to cell surface. E2 C-terminus contains a transitory transmembrane that would be disrupted by palmitoylation, resulting in reorientation of the C-terminal tail from lumenal to cytoplasmic side. This step is critical since E2 C-terminus is involved in budding by interacting with capsid proteins. This release of E2 C-terminus in cytoplasm occurs lately in protein export, and precludes premature assembly of particles at the endoplasmic reticulum membrane. Functionally, acts as a viroporin that participates in virus glycoprotein processing and transport to the plasma membrane, cell permeabilization and budding of viral particles. Disrupts the calcium homeostasis of the cell, probably at the endoplasmic reticulum level. This leads to cytoplasmic calcium elevation. Because of its lipophilic properties, the 6K protein is postulated to influence the selection of lipids that interact with the transmembrane domains of the glycoproteins, which, in turn, affects the deformability of the bilayer required for the extreme curvature that occurs as budding proceeds. Present in low amount in virions, about 3% compared to viral glycoproteins. Class II viral fusion protein. Fusion activity is inactive as long as E1 is bound to E2 in mature virion. After virus attachment to target cell via host MXRA8 and endocytosis, acidification of the endosome induce dissociation of E1/E2 heterodimer and concomitant trimerization of the E1 subunits. This E1 trimer is fusion active, and promotes release of viral nucleocapsid in cytoplasm after endosome and viral membrane fusion. Efficient fusion requires the presence of cholesterol and sphingolipid in the target membrane. This O'nyong-nyong virus (strain SG650) (ONNV) protein is Structural polyprotein.